The chain runs to 116 residues: Large ribosomal subunit protein bL17 (116 aa).

Belongs to the bacterial ribosomal protein bL17 family. In terms of assembly, part of the 50S ribosomal subunit. Contacts protein L32.

This Helicobacter pylori (strain G27) protein is Large ribosomal subunit protein bL17.